The following is a 329-amino-acid chain: Prostaglandin reductase 1 (329 aa).

At Thr18 the chain carries Phosphothreonine. NADP(+)-binding positions include 152 to 155 (GAVG), Lys178, Tyr193, Asn217, 239 to 245 (CGAISQY), 270 to 272 (FIV), and Asn321. The residue at position 178 (Lys178) is an N6-(2-hydroxyisobutyryl)lysine; alternate. At Lys178 the chain carries N6-acetyllysine; alternate.

It belongs to the NADP-dependent oxidoreductase L4BD family. As to quaternary structure, monomer or homodimer.

The protein localises to the cytoplasm. The catalysed reaction is 13,14-dihydro-15-oxo-prostaglandin E1 + NADP(+) = 15-oxoprostaglandin E1 + NADPH + H(+). It catalyses the reaction 13,14-dihydro-15-oxo-prostaglandin E2 + NADP(+) = 15-oxoprostaglandin E2 + NADPH + H(+). The enzyme catalyses 13,14-dihydro-15-oxo-prostaglandin F1alpha + NADP(+) = 15-oxoprostaglandin F1alpha + NADPH + H(+). It carries out the reaction 13,14-dihydro-15-oxo-PGF2alpha + NADP(+) = 15-oxoprostaglandin F2alpha + NADPH + H(+). The catalysed reaction is leukotriene B4 + NADP(+) = 12-oxo-leukotriene B4 + NADPH + H(+). It catalyses the reaction 20-hydroxy-leukotriene B4 + NADP(+) = 12-oxo-20-hydroxy-leukotriene B4 + NADPH + H(+). The enzyme catalyses 6-trans-leukotriene B4 + NADP(+) = 12-oxo-(5S)-hydroxy-(6E,8E,10E,14Z)-eicosatetraenoate + NADPH + H(+). It carries out the reaction (5S,12S)-dihydroxy-(6E,10E,12E,14Z)-eicosatetraenoate + NADP(+) = 12-oxo-(5S)-hydroxy-(6E,8E,10E,14Z)-eicosatetraenoate + NADPH + H(+). The catalysed reaction is an n-alkanal + NADP(+) = an alk-2-enal + NADPH + H(+). It catalyses the reaction hexanal + NADP(+) = (E)-hex-2-enal + NADPH + H(+). The enzyme catalyses octanal + NADP(+) = (2E)-octenal + NADPH + H(+). It carries out the reaction decanal + NADP(+) = (2E)-decenal + NADPH + H(+). The catalysed reaction is dodecanal + NADP(+) = (2E)-dodecenal + NADPH + H(+). It catalyses the reaction 4-hydroxynonanal + NADP(+) = (E)-4-hydroxynon-2-enal + NADPH + H(+). The enzyme catalyses pentan-2-one + NADP(+) = (E)-pent-3-en-2-one + NADPH + H(+). It carries out the reaction nonan-2-one + NADP(+) = (3E)-nonen-2-one + NADPH + H(+). Its function is as follows. NAD(P)H-dependent oxidoreductase involved in metabolic inactivation of pro- and anti-inflammatory eicosanoids: prostaglandins (PG), leukotrienes (LT) and lipoxins (LX). Catalyzes with high efficiency the reduction of the 13,14 double bond of 15-oxoPGs, including 15-oxo-PGE1, 15-oxo-PGE2, 15-oxo-PGF1-alpha and 15-oxo-PGF2-alpha. Catalyzes with lower efficiency the oxidation of the hydroxyl group at C12 of LTB4 and its derivatives, converting them into biologically less active 12-oxo-LTB4 metabolites. Reduces 15-oxo-LXA4 to 13,14 dihydro-15-oxo-LXA4, enhancing neutrophil recruitment at the inflammatory site. Plays a role in metabolic detoxification of alkenals and ketones. Reduces alpha,beta-unsaturated alkenals and ketones, particularly those with medium-chain length, showing highest affinity toward (2E)-decenal and (3E)-3-nonen-2-one. May inactivate 4-hydroxy-2-nonenal, a cytotoxic lipid constituent of oxidized low-density lipoprotein particles. The chain is Prostaglandin reductase 1 (Ptgr1) from Mus musculus (Mouse).